Consider the following 217-residue polypeptide: Large ribosomal subunit protein uL4 (217 aa).

Belongs to the universal ribosomal protein uL4 family. Part of the 50S ribosomal subunit.

Functionally, one of the primary rRNA binding proteins, this protein initially binds near the 5'-end of the 23S rRNA. It is important during the early stages of 50S assembly. It makes multiple contacts with different domains of the 23S rRNA in the assembled 50S subunit and ribosome. Its function is as follows. Forms part of the polypeptide exit tunnel. The chain is Large ribosomal subunit protein uL4 from Koribacter versatilis (strain Ellin345).